The chain runs to 619 residues: Zinc finger protein 668 (619 aa).

Met1 is subject to N-acetylmethionine. The residue at position 10 (Ser10) is a Phosphoserine. The C2H2-type 1 zinc finger occupies 22-44; the sequence is YKCLFCTKTFPNAPRAARHAATH. The interval 36–74 is disordered; the sequence is RAARHAATHTPTDCTEEVREAQPKVDTEPKAEEASGDKV. Residues 51–71 show a composition bias toward basic and acidic residues; the sequence is EEVREAQPKVDTEPKAEEASG. Residues Lys59, Lys65, and Lys80 each participate in a glycyl lysine isopeptide (Lys-Gly) (interchain with G-Cter in SUMO2) cross-link. C2H2-type zinc fingers lie at residues 84-106, 112-134, 140-162, 168-190, 196-218, 224-246, 252-274, 280-302, 308-330, 336-358, and 364-386; these read YACP…GRSH, FPCP…LASH, FRCT…QRGH, YACP…RRTH, YSCE…ERSH, FLCS…QRIH, YRCP…ERTH, FLCP…QRAH, YRCE…RRVH, FKCL…ALVH, and FRCE…SRMH. Lys154 participates in a covalent cross-link: Glycyl lysine isopeptide (Lys-Gly) (interchain with G-Cter in SUMO2). Ser387 is modified (phosphoserine). The C2H2-type 13 zinc finger occupies 392–414; sequence FHCNACGKSFVVLSSLRKHERTH. The disordered stretch occupies residues 491 to 513; it reads VGEAPSTLGDAGEVGGEETDEKP. Residue Lys512 forms a Glycyl lysine isopeptide (Lys-Gly) (interchain with G-Cter in SUMO2) linkage. C2H2-type zinc fingers lie at residues 516-538, 544-566, and 572-594; these read FVCR…ERSH, FPCT…SRTH, and YSCS…ERTH.

Belongs to the krueppel C2H2-type zinc-finger protein family.

The protein resides in the nucleus. Functionally, may be involved in transcriptional regulation. May play a role in DNA repair process. The chain is Zinc finger protein 668 (Znf668) from Mus musculus (Mouse).